Reading from the N-terminus, the 434-residue chain is Trigger factor (434 aa).

Positions 160-245 constitute a PPIase FKBP-type domain; the sequence is GDKVKMNFVG…LTEVQAANLP (86 aa).

It belongs to the FKBP-type PPIase family. Tig subfamily.

Its subcellular location is the cytoplasm. The catalysed reaction is [protein]-peptidylproline (omega=180) = [protein]-peptidylproline (omega=0). Functionally, involved in protein export. Acts as a chaperone by maintaining the newly synthesized protein in an open conformation. Functions as a peptidyl-prolyl cis-trans isomerase. The sequence is that of Trigger factor from Shewanella baltica (strain OS185).